A 3434-amino-acid polypeptide reads, in one-letter code: Genome polyprotein (3434 aa).

The interval serine 2–asparagine 15 is interaction with host EXOC1. Residues serine 2–threonine 110 are Cytoplasmic-facing. Positions leucine 37–valine 72 are hydrophobic; homodimerization of capsid protein C. A propeptide spans glycine 106–alanine 125 (ER anchor for the capsid protein C, removed in mature form by serine protease NS3). Residues serine 111–phenylalanine 131 form a helical membrane-spanning segment. Residues glutamine 132–asparagine 251 lie on the Extracellular side of the membrane. N-linked (GlcNAc...) asparagine; by host glycosylation occurs at asparagine 140. The chain crosses the membrane as a helical span at residues tryptophan 252–serine 272. Over asparagine 273–lysine 277 the chain is Cytoplasmic. A helical transmembrane segment spans residues valine 278–serine 292. Over phenylalanine 293 to leucine 745 the chain is Extracellular. Cystine bridges form between cysteine 295–cysteine 322, cysteine 352–cysteine 408, cysteine 352–cysteine 413, cysteine 366–cysteine 397, cysteine 384–cysteine 408, and cysteine 384–cysteine 413. The interval aspartate 390–glycine 403 is fusion peptide. The N-linked (GlcNAc...) asparagine; by host glycan is linked to asparagine 446. Cystine bridges form between cysteine 482–cysteine 580 and cysteine 597–cysteine 628. Residues phenylalanine 746–valine 766 form a helical membrane-spanning segment. At asparagine 767–serine 772 the chain is on the cytoplasmic side. A helical membrane pass occupies residues isoleucine 773–alanine 793. Residues aspartate 794–aspartate 1218 are Extracellular-facing. 2 disulfide bridges follow: cysteine 797-cysteine 808 and cysteine 848-cysteine 936. N-linked (GlcNAc...) asparagine; by host glycans are attached at residues asparagine 923 and asparagine 968. Cystine bridges form between cysteine 972–cysteine 1016, cysteine 1073–cysteine 1122, cysteine 1084–cysteine 1105, and cysteine 1106–cysteine 1109. Asparagine 1000 carries an N-linked (GlcNAc...) (high mannose) asparagine; by host glycan. A helical membrane pass occupies residues valine 1219–leucine 1239. Residues threonine 1240–asparagine 1249 lie on the Cytoplasmic side of the membrane. Residues leucine 1250–isoleucine 1270 form a helical membrane-spanning segment. The Lumenal segment spans residues proline 1271–alanine 1286. The chain crosses the membrane as a helical span at residues methionine 1287–methionine 1307. Position 1308 (arginine 1308) is a topological domain, cytoplasmic. Residues methionine 1309–asparagine 1329 form a helical membrane-spanning segment. Residues glutamate 1330–glycine 1340 lie on the Lumenal side of the membrane. The chain crosses the membrane as a helical span at residues alanine 1341–alanine 1361. The Cytoplasmic portion of the chain corresponds to glycine 1362–glycine 1373. The helical transmembrane segment at tryptophan 1374 to alanine 1394 threads the bilayer. The Lumenal segment spans residues glutamate 1395–aspartate 1397. Residues isoleucine 1398–serine 1418 traverse the membrane as a helical segment. Over glycine 1419–threonine 1475 the chain is Cytoplasmic. The segment at leucine 1426–valine 1465 is interacts with and activates NS3 protease. An intramembrane region (helical) is located at residues cysteine 1476 to leucine 1496. Topologically, residues threonine 1497–alanine 2172 are cytoplasmic. One can recognise a Peptidase S7 domain in the interval glycine 1504–alanine 1681. Active-site charge relay system; for serine protease NS3 activity residues include histidine 1554, aspartate 1578, and serine 1638. The Helicase ATP-binding domain occupies proline 1684–serine 1840. Residues lysine 1688–glutamine 1691 form an important for RNA-binding region. Leucine 1697 to threonine 1704 contributes to the ATP binding site. A DEAH box motif is present at residues aspartate 1788–histidine 1791. The 166-residue stretch at glycine 1851–glutamate 2016 folds into the Helicase C-terminal domain. An N6-acetyllysine; by host modification is found at lysine 1892. The segment at alanine 1958–glycine 1979 is disordered. Positions glutamate 2167–aspartate 2171 are regulates the ATPase activity of NS3 helicase. Residues leucine 2173–methionine 2193 traverse the membrane as a helical segment. Topologically, residues methionine 2194–lysine 2197 are lumenal. An intramembrane region (helical) is located at residues glycine 2198–methionine 2218. Over serine 2219–aspartate 2220 the chain is Lumenal. Residues valine 2221–isoleucine 2241 traverse the membrane as a helical segment. Over proline 2242–alanine 2256 the chain is Cytoplasmic. The chain crosses the membrane as a helical span at residues valine 2257 to alanine 2271. Residues asparagine 2272 to aspartate 2309 lie on the Lumenal side of the membrane. The helical intramembrane region spans leucine 2310–isoleucine 2330. At lysine 2331–aspartate 2366 the chain is on the lumenal side. A helical membrane pass occupies residues leucine 2367–leucine 2394. Over histidine 2395–arginine 2446 the chain is Cytoplasmic. The chain crosses the membrane as a helical span at residues leucine 2447–threonine 2467. Residues threonine 2468 to threonine 2498 lie on the Lumenal side of the membrane. A helical membrane pass occupies residues glycine 2499 to isoleucine 2519. The Cytoplasmic segment spans residues lysine 2520 to leucine 3434. Residues glycine 2530–alanine 2795 enclose the mRNA cap 0-1 NS5-type MT domain. S-adenosyl-L-methionine is bound at residue serine 2585. Phosphoserine is present on serine 2585. Lysine 2590 (for 2'-O-MTase activity) is an active-site residue. Residues glycine 2615, tryptophan 2616, threonine 2633, lysine 2634, aspartate 2660, and valine 2661 each coordinate S-adenosyl-L-methionine. Aspartate 2675 functions as the For 2'-O-MTase activity in the catalytic mechanism. Residue isoleucine 2676 participates in S-adenosyl-L-methionine binding. Residues lysine 2711 and glutamate 2747 each act as for 2'-O-MTase activity in the active site. An S-adenosyl-L-methionine-binding site is contributed by tyrosine 2749. Residues glutamate 2969, histidine 2973, cysteine 2978, and cysteine 2981 each coordinate Zn(2+). Residues glycine 3059 to alanine 3211 form the RdRp catalytic domain. Residues histidine 3246, cysteine 3262, and cysteine 3381 each coordinate Zn(2+).

The protein in the N-terminal section; belongs to the class I-like SAM-binding methyltransferase superfamily. mRNA cap 0-1 NS5-type methyltransferase family. As to quaternary structure, homodimer. Interacts (via N-terminus) with host EXOC1 (via C-terminus); this interaction results in EXOC1 degradation through the proteasome degradation pathway. Forms heterodimers with envelope protein E in the endoplasmic reticulum and Golgi. In terms of assembly, homodimer; in the endoplasmic reticulum and Golgi. Interacts with protein prM. Interacts with non-structural protein 1. As to quaternary structure, homodimer; Homohexamer when secreted. Interacts with envelope protein E. NS1 interacts with NS4B. Interacts with host complement protein CFH; this interaction leads to the degradation of C3. Interacts (via N-terminus) with serine protease NS3. In terms of assembly, forms a heterodimer with serine protease NS3. May form homooligomers. As to quaternary structure, forms a heterodimer with NS2B. Interacts with non-structural protein 2A (via N-terminus). Interacts with NS4B. Interacts with unphosphorylated RNA-directed RNA polymerase NS5; this interaction stimulates RNA-directed RNA polymerase NS5 guanylyltransferase activity. Interacts with serine protease NS3. In terms of assembly, homodimer. Interacts with host STAT2; this interaction inhibits the phosphorylation of the latter, and, when all viral proteins are present (polyprotein), targets STAT2 for degradation. Interacts with serine protease NS3. In terms of processing, specific enzymatic cleavages in vivo yield mature proteins. Cleavages in the lumen of endoplasmic reticulum are performed by host signal peptidase, whereas cleavages in the cytoplasmic side are performed by serine protease NS3. Signal cleavage at the 2K-4B site requires a prior NS3 protease-mediated cleavage at the 4A-2K site. Post-translationally, cleaved in post-Golgi vesicles by a host furin, releasing the mature small envelope protein M, and peptide pr. This cleavage is incomplete as up to 30% of viral particles still carry uncleaved prM. N-glycosylated. In terms of processing, N-glycosylated. The excreted form is glycosylated and this is required for efficient secretion of the protein from infected cells. Post-translationally, acetylated by host KAT5. Acetylation modulates NS3 RNA-binding and unwinding activities and plays an important positive role for viral replication. Phosphorylated on serines residues. This phosphorylation may trigger NS5 nuclear localization.

Its subcellular location is the virion. It is found in the host nucleus. The protein localises to the host cytoplasm. It localises to the host perinuclear region. The protein resides in the secreted. Its subcellular location is the virion membrane. It is found in the host endoplasmic reticulum membrane. The catalysed reaction is Selective hydrolysis of -Xaa-Xaa-|-Yaa- bonds in which each of the Xaa can be either Arg or Lys and Yaa can be either Ser or Ala.. The enzyme catalyses RNA(n) + a ribonucleoside 5'-triphosphate = RNA(n+1) + diphosphate. It carries out the reaction a ribonucleoside 5'-triphosphate + H2O = a ribonucleoside 5'-diphosphate + phosphate + H(+). It catalyses the reaction ATP + H2O = ADP + phosphate + H(+). The catalysed reaction is a 5'-end (5'-triphosphoguanosine)-ribonucleoside in mRNA + S-adenosyl-L-methionine = a 5'-end (N(7)-methyl 5'-triphosphoguanosine)-ribonucleoside in mRNA + S-adenosyl-L-homocysteine. The enzyme catalyses a 5'-end (N(7)-methyl 5'-triphosphoguanosine)-ribonucleoside in mRNA + S-adenosyl-L-methionine = a 5'-end (N(7)-methyl 5'-triphosphoguanosine)-(2'-O-methyl-ribonucleoside) in mRNA + S-adenosyl-L-homocysteine + H(+). Its function is as follows. Plays a role in virus budding by binding to the cell membrane and gathering the viral RNA into a nucleocapsid that forms the core of a mature virus particle. During virus entry, may induce genome penetration into the host cytoplasm after hemifusion induced by the surface proteins. Can migrate to the cell nucleus where it modulates host functions. Overcomes the anti-viral effects of host EXOC1 by sequestering and degrading the latter through the proteasome degradation pathway. In terms of biological role, inhibits RNA silencing by interfering with host Dicer. Functionally, prevents premature fusion activity of envelope proteins in trans-Golgi by binding to envelope protein E at pH6.0. After virion release in extracellular space, gets dissociated from E dimers. Acts as a chaperone for envelope protein E during intracellular virion assembly by masking and inactivating envelope protein E fusion peptide. prM is the only viral peptide matured by host furin in the trans-Golgi network probably to avoid catastrophic activation of the viral fusion activity in acidic Golgi compartment prior to virion release. prM-E cleavage is inefficient, and many virions are only partially matured. These uncleaved prM would play a role in immune evasion. Its function is as follows. May play a role in virus budding. Exerts cytotoxic effects by activating a mitochondrial apoptotic pathway through M ectodomain. May display a viroporin activity. In terms of biological role, binds to host cell surface receptor and mediates fusion between viral and cellular membranes. Envelope protein is synthesized in the endoplasmic reticulum in the form of heterodimer with protein prM. They play a role in virion budding in the ER, and the newly formed immature particle is covered with 60 spikes composed of heterodimer between precursor prM and envelope protein E. The virion is transported to the Golgi apparatus where the low pH causes dissociation of PrM-E heterodimers and formation of E homodimers. prM-E cleavage is inefficient, and many virions are only partially matured. These uncleaved prM would play a role in immune evasion. Functionally, involved in immune evasion, pathogenesis and viral replication. Once cleaved off the polyprotein, is targeted to three destinations: the viral replication cycle, the plasma membrane and the extracellular compartment. Essential for viral replication. Required for formation of the replication complex and recruitment of other non-structural proteins to the ER-derived membrane structures. Excreted as a hexameric lipoparticle that plays a role against host immune response. Antagonizing the complement function. Binds to the host macrophages and dendritic cells. Inhibits signal transduction originating from Toll-like receptor 3 (TLR3). Component of the viral RNA replication complex that functions in virion assembly and antagonizes the host alpha/beta interferon antiviral response. Its function is as follows. Required cofactor for the serine protease function of NS3. May have membrane-destabilizing activity and form viroporins. In terms of biological role, displays three enzymatic activities: serine protease, NTPase and RNA helicase. NS3 serine protease, in association with NS2B, performs its autocleavage and cleaves the polyprotein at dibasic sites in the cytoplasm: C-prM, NS2A-NS2B, NS2B-NS3, NS3-NS4A, NS4A-2K and NS4B-NS5. NS3 RNA helicase binds RNA and unwinds dsRNA in the 3' to 5' direction. Functionally, regulates the ATPase activity of the NS3 helicase activity. NS4A allows NS3 helicase to conserve energy during unwinding. Functions as a signal peptide for NS4B and is required for the interferon antagonism activity of the latter. Its function is as follows. Induces the formation of ER-derived membrane vesicles where the viral replication takes place. Inhibits interferon (IFN)-induced host STAT1 phosphorylation and nuclear translocation, thereby preventing the establishment of cellular antiviral state by blocking the IFN-alpha/beta pathway. Inhibits STAT2 translocation in the nucleus after IFN-alpha treatment. In terms of biological role, replicates the viral (+) and (-) RNA genome, and performs the capping of genomes in the cytoplasm. NS5 methylates viral RNA cap at guanine N-7 and ribose 2'-O positions. Besides its role in RNA genome replication, also prevents the establishment of cellular antiviral state by blocking the interferon-alpha/beta (IFN-alpha/beta) signaling pathway. Inhibits host TYK2 and STAT2 phosphorylation, thereby preventing activation of JAK-STAT signaling pathway. The chain is Genome polyprotein from Culex annulirostris (Common banded mosquito).